The chain runs to 272 residues: HMP-PP phosphatase (272 aa).

Aspartate 8 functions as the Nucleophile in the catalytic mechanism. Residues aspartate 8, aspartate 10, and aspartate 212 each coordinate Mg(2+).

Belongs to the HAD-like hydrolase superfamily. Cof family. The cofactor is Mg(2+).

It carries out the reaction 4-amino-2-methyl-5-(diphosphooxymethyl)pyrimidine + H2O = 4-amino-2-methyl-5-(phosphooxymethyl)pyrimidine + phosphate + H(+). In terms of biological role, catalyzes the hydrolysis of 4-amino-2-methyl-5-hydroxymethylpyrimidine pyrophosphate (HMP-PP) to 4-amino-2-methyl-5-hydroxymethylpyrimidine phosphate (HMP-P). The chain is HMP-PP phosphatase from Salmonella newport (strain SL254).